Reading from the N-terminus, the 59-residue chain is Conotoxin Ts-03 (59 aa).

An N-terminal signal peptide occupies residues 1–19; that stretch reads MRCLPVFIILLLLIPSAAS. Positions 20 to 47 are excised as a propeptide; that stretch reads VAQPKTKDDVALASFYDNAKRTLQRHWA.

This sequence belongs to the conotoxin T superfamily. Contains 2 disulfide bonds that can be either 'C1-C3, C2-C4' or 'C1-C4, C2-C3', since these disulfide connectivities have been observed for conotoxins with cysteine framework V (for examples, see AC P0DQQ7 and AC P81755). Expressed by the venom duct.

Its subcellular location is the secreted. The protein is Conotoxin Ts-03 of Conus tessulatus (Tessellate cone).